The sequence spans 337 residues: MGKLELLQCLTGHRGRAWGAGWHPKGNVLATCGEDKTIRIWAEDASQRWVAKTVLSDGHSRTIRDVAWSPCGQYLASASFDATVAIWDKKSGEFECNATLEGHENEVKSVSWSKSGSLLATCSRDKSVWVWEVAQEDEYECAAVLNTHTQDVKKVEWHPHEDILASASYDNTIKLYKEDLADSDWSSFDTLVSHESTVWSISFDGSGNRLASCSDDQTVKIWQEYKPGNEFGVSCPDNTPVWKCVCTLAGYHSRSVYDISWCKQSGLLATACGDDMVRIFKEVEGSSPHEPTFEMVGSKHAHSQDVNTVEWNPTVVGLLVTTSDDGDVKLWKYEPEE.

WD repeat units lie at residues 12-51 (GHRG…RWVA), 58-97 (GHSR…FECN), 102-141 (GHEN…EYEC), 147-186 (THTQ…SDWS), 193-232 (SHES…NEFG), 251-290 (YHSR…SPHE), and 301-337 (AHSQ…EPEE).

It belongs to the WD repeat CIA1 family.

In terms of biological role, essential component of the cytosolic iron-sulfur (Fe/S) protein assembly machinery. Required for the maturation of extramitochondrial Fe/S proteins. The sequence is that of Probable cytosolic iron-sulfur protein assembly protein Ciao1 from Aedes aegypti (Yellowfever mosquito).